Consider the following 416-residue polypeptide: MAYFLEQTDSEIFELIFEEYKRQNEHLEMIASENYTFASVMEAMGSVLTNKYAEGYPNKRYYGGCEVVDKIESLAIERAKKLFNCQFANVQAHSGSQANNAVYHALLKPYDKILGMDLSCGGHLTHGAKVSLTGKHYQSFSYGVNLDGYIDYEEALKIAQSVKPEIIVCGFSAYPREIDFKKFREIADEVGALLLGDIAHVAGLVVAGEHAHPFPHCHVVSSTTHKTLRGPRGGLILTNDEEIAAKIDKAIFPGTQGGPLMHAIAAKAVGFKENLKPEFKAYAQLVKSNMQVLAKALQEKNHKLVSGGTSNHLLLMDFLDKPYSGKDADIALGNAGITVNKNTIPGETRSPFVTSGIRIGSAALSARGMGAKEFEIIGNKISDILNDINNVSLQLHVKEELKAMASQFPVYQQPIF.

Residues Leu118 and 122–124 each bind (6S)-5,6,7,8-tetrahydrofolate; that span reads GHL. Lys226 is subject to N6-(pyridoxal phosphate)lysine. (6S)-5,6,7,8-tetrahydrofolate contacts are provided by residues Glu242 and 350–352; that span reads SPF.

The protein belongs to the SHMT family. As to quaternary structure, homodimer. Requires pyridoxal 5'-phosphate as cofactor.

It localises to the cytoplasm. The enzyme catalyses (6R)-5,10-methylene-5,6,7,8-tetrahydrofolate + glycine + H2O = (6S)-5,6,7,8-tetrahydrofolate + L-serine. The protein operates within one-carbon metabolism; tetrahydrofolate interconversion. Its pathway is amino-acid biosynthesis; glycine biosynthesis; glycine from L-serine: step 1/1. Catalyzes the reversible interconversion of serine and glycine with tetrahydrofolate (THF) serving as the one-carbon carrier. This reaction serves as the major source of one-carbon groups required for the biosynthesis of purines, thymidylate, methionine, and other important biomolecules. Also exhibits THF-independent aldolase activity toward beta-hydroxyamino acids, producing glycine and aldehydes, via a retro-aldol mechanism. This Helicobacter pylori (strain Shi470) protein is Serine hydroxymethyltransferase.